We begin with the raw amino-acid sequence, 309 residues long: Type II methyltransferase M.HgiDI (309 aa).

The region spanning 1 to 297 (MKTIDLFAGC…TSLQAYLNQP (297 aa)) is the SAM-dependent MTase C5-type domain. The active site involves Cys-75.

The protein belongs to the class I-like SAM-binding methyltransferase superfamily. C5-methyltransferase family.

It catalyses the reaction a 2'-deoxycytidine in DNA + S-adenosyl-L-methionine = a 5-methyl-2'-deoxycytidine in DNA + S-adenosyl-L-homocysteine + H(+). Functionally, a methylase that recognizes the double-stranded sequence 5'-GRCGYC-3', methylates C-? on both strands, and protects the DNA from cleavage by the HgiDI endonuclease. This chain is Type II methyltransferase M.HgiDI, found in Herpetosiphon aurantiacus (Herpetosiphon giganteus).